Reading from the N-terminus, the 651-residue chain is DNA mismatch repair protein MutL (651 aa).

The protein belongs to the DNA mismatch repair MutL/HexB family.

This protein is involved in the repair of mismatches in DNA. It is required for dam-dependent methyl-directed DNA mismatch repair. May act as a 'molecular matchmaker', a protein that promotes the formation of a stable complex between two or more DNA-binding proteins in an ATP-dependent manner without itself being part of a final effector complex. This Streptococcus mutans serotype c (strain ATCC 700610 / UA159) protein is DNA mismatch repair protein MutL.